The primary structure comprises 58 residues: Small ribosomal subunit protein bS21 (58 aa).

The tract at residues 39–58 (EKPSVKRKRKSEVARKRKKF) is disordered. Over residues 43–58 (VKRKRKSEVARKRKKF) the composition is skewed to basic residues.

The protein belongs to the bacterial ribosomal protein bS21 family.

In Streptococcus pneumoniae (strain ATCC BAA-255 / R6), this protein is Small ribosomal subunit protein bS21.